We begin with the raw amino-acid sequence, 91 residues long: Acylphosphatase (91 aa).

Residues 3–90 (RVLIRVKGKV…EIYLDFSITQ (88 aa)) form the Acylphosphatase-like domain. Catalysis depends on residues Arg-18 and Asn-36.

Belongs to the acylphosphatase family.

It carries out the reaction an acyl phosphate + H2O = a carboxylate + phosphate + H(+). The chain is Acylphosphatase (acyP) from Shewanella amazonensis (strain ATCC BAA-1098 / SB2B).